Consider the following 622-residue polypeptide: Palmitoyltransferase ZDHHC13 (622 aa).

M1 is modified (N-acetylmethionine). Residues 1–291 (MEGPGLGSQC…RLWRWLQKCE (291 aa)) lie on the Cytoplasmic side of the membrane. 7 ANK repeats span residues 43–78 (PLIE…VRQP), 81–110 (ENVS…VVDQ), 115–144 (LNST…DPTL), 148–177 (EGFS…SVNM), 181–211 (NGQT…SLNV), 216–245 (HQNT…SLDI), and 249–277 (KGET…KMRA). Residues 292–312 (LFLLLMLSVITMWAIGYILDF) form a helical membrane-spanning segment. The Lumenal segment spans residues 313–320 (NSDSWLLK). Residues 321–341 (GCLLVTLFFLTSLFPRFLVGY) traverse the membrane as a helical segment. At 342 to 347 (KNLVYL) the chain is on the cytoplasmic side. Residues 348–368 (PTAFLLSSVFWIFMTWFILFF) form a helical membrane-spanning segment. Topologically, residues 369-370 (PD) are lumenal. The chain crosses the membrane as a helical span at residues 371-391 (LAGAPFYFSFIFSIVAFLYFF). The Cytoplasmic portion of the chain corresponds to 392–470 (YKTWATDPGF…RCIGFGNHHY (79 aa)). Positions 426–476 (TFCTSCLIRKPLRSLHCHVCNCCVARYDQHCLWTGRCIGFGNHHYYIFFLF) constitute a DHHC domain. The active-site S-palmitoyl cysteine intermediate is the C456. Residues 471-491 (YIFFLFFLSMVCGWIIYGSFI) form a helical membrane-spanning segment. Residues 492–518 (YLSSHCATTFKEDGLWTYLNQIVACSP) lie on the Lumenal side of the membrane. A helical membrane pass occupies residues 519-539 (WVLYILMLATFHFSWSTFLLL). Topologically, residues 540-622 (NQLFQIAFLG…PAREKVLRSV (83 aa)) are cytoplasmic.

It belongs to the DHHC palmitoyltransferase family. AKR/ZDHHC17 subfamily. As to quaternary structure, interacts (via ANK repeats) with CLIP3. Interacts (via ANK repeats) with DNAJC5 (via C-terminus). Interacts (via ANK repeats) with HTT. Interacts (via ANK repeats) with MAP6. Interacts (via ANK repeats) with SNAP23. Interacts (via ANK repeats) with SNAP25. May interact (via ANK repeats) with SPRED2.

The protein resides in the golgi apparatus membrane. It is found in the cytoplasmic vesicle membrane. It catalyses the reaction L-cysteinyl-[protein] + hexadecanoyl-CoA = S-hexadecanoyl-L-cysteinyl-[protein] + CoA. In terms of biological role, palmitoyltransferase that could catalyze the addition of palmitate onto various protein substrates. Palmitoyltransferase for HTT and GAD2. May play a role in Mg(2+) transport. The protein is Palmitoyltransferase ZDHHC13 of Homo sapiens (Human).